The chain runs to 67 residues: Large ribosomal subunit protein uL29 (67 aa).

It belongs to the universal ribosomal protein uL29 family.

The protein is Large ribosomal subunit protein uL29 (rpmC) of Halalkalibacterium halodurans (strain ATCC BAA-125 / DSM 18197 / FERM 7344 / JCM 9153 / C-125) (Bacillus halodurans).